We begin with the raw amino-acid sequence, 277 residues long: Probable endonuclease 4 (277 aa).

9 residues coordinate Zn(2+): His69, His109, Glu145, Asp179, His182, His214, Asp227, His229, and Glu259.

Belongs to the AP endonuclease 2 family. Zn(2+) is required as a cofactor.

It catalyses the reaction Endonucleolytic cleavage to 5'-phosphooligonucleotide end-products.. In terms of biological role, endonuclease IV plays a role in DNA repair. It cleaves phosphodiester bonds at apurinic or apyrimidinic (AP) sites, generating a 3'-hydroxyl group and a 5'-terminal sugar phosphate. In Bacteroides thetaiotaomicron (strain ATCC 29148 / DSM 2079 / JCM 5827 / CCUG 10774 / NCTC 10582 / VPI-5482 / E50), this protein is Probable endonuclease 4.